The sequence spans 188 residues: Peptide deformylase (188 aa).

Positions 94 and 136 each coordinate Fe cation. Glu-137 is a catalytic residue. Position 140 (His-140) interacts with Fe cation.

The protein belongs to the polypeptide deformylase family. Fe(2+) serves as cofactor.

The catalysed reaction is N-terminal N-formyl-L-methionyl-[peptide] + H2O = N-terminal L-methionyl-[peptide] + formate. Its function is as follows. Removes the formyl group from the N-terminal Met of newly synthesized proteins. Requires at least a dipeptide for an efficient rate of reaction. N-terminal L-methionine is a prerequisite for activity but the enzyme has broad specificity at other positions. The protein is Peptide deformylase of Chlorobium phaeobacteroides (strain DSM 266 / SMG 266 / 2430).